A 145-amino-acid chain; its full sequence is MYDKLNVALSKDLRKKYGIRSFPIVKGDVVKVVSGARKGEGGKVAEVDHHSGLVIVEGITIAKIDGKQKGFGISPEKLQITHLDLSRSERFQKIKELANIKHITIQEEPIQEEQQKTEETKQEIAPEEVEAKEAQDKQEVKENDQ.

Residues 108–145 (EPIQEEQQKTEETKQEIAPEEVEAKEAQDKQEVKENDQ) form a disordered region. Basic and acidic residues predominate over residues 113 to 145 (EQQKTEETKQEIAPEEVEAKEAQDKQEVKENDQ).

It belongs to the universal ribosomal protein uL24 family. In terms of assembly, part of the 50S ribosomal subunit.

In terms of biological role, one of two assembly initiator proteins, it binds directly to the 5'-end of the 23S rRNA, where it nucleates assembly of the 50S subunit. Located at the polypeptide exit tunnel on the outside of the subunit. This chain is Large ribosomal subunit protein uL24 (rpl24), found in Thermoplasma volcanium (strain ATCC 51530 / DSM 4299 / JCM 9571 / NBRC 15438 / GSS1).